We begin with the raw amino-acid sequence, 432 residues long: 7-dehydrocholesterol reductase (432 aa).

The next 9 membrane-spanning stretches (helical) occupy residues 12 to 34 (YASM…YTMV), 64 to 86 (LIAW…LLPG), 107 to 126 (LAAY…FGIF), 136 to 155 (GEIF…LLYI), 195 to 212 (FTNC…AVTY), 227 to 249 (MLVN…AGYW), 261 to 283 (FYIC…MYLV), 287 to 309 (VELG…YINY), and 371 to 393 (SAFF…VIFL).

It belongs to the ERG4/ERG24 family.

The protein resides in the endoplasmic reticulum membrane. The enzyme catalyses cholesterol + NADP(+) = 7-dehydrocholesterol + NADPH + H(+). It functions in the pathway lipid metabolism; steroid biosynthesis. Production of cholesterol by reduction of C7-C8 double bond of 7-dehydrocholesterol (7-DHC). Lesions in the gene coding for the enzyme cause dwarfism. The chain is 7-dehydrocholesterol reductase (DWF5) from Arabidopsis thaliana (Mouse-ear cress).